The following is a 231-amino-acid chain: L-ribulose-5-phosphate 4-epimerase (231 aa).

Substrate is bound by residues 27–28, 44–45, and 73–74; these read GN, SG, and SS. 3 residues coordinate Zn(2+): aspartate 75, histidine 94, and histidine 96. Aspartate 119 serves as the catalytic Proton donor/acceptor. Histidine 168 provides a ligand contact to Zn(2+). Tyrosine 226 (proton donor/acceptor) is an active-site residue.

It belongs to the aldolase class II family. AraD/FucA subfamily. The cofactor is Zn(2+).

It catalyses the reaction L-ribulose 5-phosphate = D-xylulose 5-phosphate. It functions in the pathway carbohydrate degradation; L-arabinose degradation via L-ribulose; D-xylulose 5-phosphate from L-arabinose (bacterial route): step 3/3. Functionally, involved in the degradation of L-arabinose. Catalyzes the interconversion of L-ribulose 5-phosphate (LRu5P) and D-xylulose 5-phosphate (D-Xu5P) via a retroaldol/aldol mechanism (carbon-carbon bond cleavage analogous to a class II aldolase reaction). The sequence is that of L-ribulose-5-phosphate 4-epimerase (araD) from Halalkalibacterium halodurans (strain ATCC BAA-125 / DSM 18197 / FERM 7344 / JCM 9153 / C-125) (Bacillus halodurans).